The following is a 703-amino-acid chain: Heat shock protein 75 kDa, mitochondrial (703 aa).

The transit peptide at 1–56 directs the protein to the mitochondrion; the sequence is MARELRMLLLWGRRLRAPALAAACGGKPVLCPWRPPAQSWGPPRSLASSFHVGRPF. The ATP site is built by asparagine 118 and aspartate 157. Serine 169 carries the phosphoserine modification. Asparagine 170 is a binding site for ATP. Residue threonine 173 is modified to Phosphothreonine. ATP is bound by residues phenylalanine 204 and arginine 401. N6-acetyllysine is present on residues lysine 423, lysine 430, and lysine 465. Threonine 493 is modified (phosphothreonine).

The protein belongs to the heat shock protein 90 family. As to quaternary structure, binds to the intracellular domain of tumor necrosis factor type 1 receptor. Binds to RB1. Interacts with SRC. Interacts with SDHA.

Its subcellular location is the mitochondrion. It localises to the mitochondrion inner membrane. The protein resides in the mitochondrion matrix. In terms of biological role, chaperone that expresses an ATPase activity. Involved in maintaining mitochondrial function and polarization, downstream of PINK1 and mitochondrial complex I. Is a negative regulator of mitochondrial respiration able to modulate the balance between oxidative phosphorylation and aerobic glycolysis. The impact of TRAP1 on mitochondrial respiration is probably mediated by modulation of mitochondrial SRC and inhibition of SDHA. This is Heat shock protein 75 kDa, mitochondrial (TRAP1) from Bos taurus (Bovine).